The chain runs to 67 residues: Large ribosomal subunit protein uL29 (67 aa).

It belongs to the universal ribosomal protein uL29 family.

This chain is Large ribosomal subunit protein uL29, found in Desulforudis audaxviator (strain MP104C).